Reading from the N-terminus, the 430-residue chain is Tol-Pal system protein TolB (430 aa).

The N-terminal stretch at 1-21 (MKQALRVAFGFLMLWAAVLHA) is a signal peptide.

It belongs to the TolB family. The Tol-Pal system is composed of five core proteins: the inner membrane proteins TolA, TolQ and TolR, the periplasmic protein TolB and the outer membrane protein Pal. They form a network linking the inner and outer membranes and the peptidoglycan layer.

The protein localises to the periplasm. Its function is as follows. Part of the Tol-Pal system, which plays a role in outer membrane invagination during cell division and is important for maintaining outer membrane integrity. TolB occupies a key intermediary position in the Tol-Pal system because it communicates directly with both membrane-embedded components, Pal in the outer membrane and TolA in the inner membrane. The sequence is that of Tol-Pal system protein TolB from Salmonella enteritidis PT4 (strain P125109).